A 130-amino-acid polypeptide reads, in one-letter code: Small ribosomal subunit protein uS9 (130 aa).

The segment at 104-130 (LTRDPRMKERKKYGLKKARRAPQFSKR) is disordered. The span at 111–130 (KERKKYGLKKARRAPQFSKR) shows a compositional bias: basic residues.

It belongs to the universal ribosomal protein uS9 family.

The chain is Small ribosomal subunit protein uS9 from Ruminiclostridium cellulolyticum (strain ATCC 35319 / DSM 5812 / JCM 6584 / H10) (Clostridium cellulolyticum).